We begin with the raw amino-acid sequence, 100 residues long: uncharacterized protein (100 aa).

A disordered region spans residues 40–100; that stretch reads GDQMARKATS…DPTKNKSGRG (61 aa).

This is an uncharacterized protein from Mycobacterium tuberculosis (strain ATCC 25618 / H37Rv).